The sequence spans 130 residues: DNA-directed RNA polymerase subunit omega (130 aa).

Residues 109–130 (EEELLKGLEGLAPPEEQPEEDE) form a disordered region.

Belongs to the RNA polymerase subunit omega family. In terms of assembly, the RNAP catalytic core consists of 2 alpha, 1 beta, 1 beta' and 1 omega subunit. When a sigma factor is associated with the core the holoenzyme is formed, which can initiate transcription.

It catalyses the reaction RNA(n) + a ribonucleoside 5'-triphosphate = RNA(n+1) + diphosphate. Its function is as follows. Promotes RNA polymerase assembly. Latches the N- and C-terminal regions of the beta' subunit thereby facilitating its interaction with the beta and alpha subunits. The protein is DNA-directed RNA polymerase subunit omega of Rhodopseudomonas palustris (strain BisA53).